Here is a 455-residue protein sequence, read N- to C-terminus: Ribosomal protein uS12 methylthiotransferase RimO (455 aa).

In terms of domain architecture, MTTase N-terminal spans 30–140 (PTIGMVSLGC…VLDAVHGAVP (111 aa)). The [4Fe-4S] cluster site is built by Cys-39, Cys-75, Cys-104, Cys-171, Cys-175, and Cys-178. The 230-residue stretch at 157 to 386 (LTPRHFSYLK…MEKAQAISEV (230 aa)) folds into the Radical SAM core domain. In terms of domain architecture, TRAM spans 389–455 (AAKVGRRIEV…GEYDIWGRPV (67 aa)).

The protein belongs to the methylthiotransferase family. RimO subfamily. Requires [4Fe-4S] cluster as cofactor.

Its subcellular location is the cytoplasm. It carries out the reaction L-aspartate(89)-[ribosomal protein uS12]-hydrogen + (sulfur carrier)-SH + AH2 + 2 S-adenosyl-L-methionine = 3-methylsulfanyl-L-aspartate(89)-[ribosomal protein uS12]-hydrogen + (sulfur carrier)-H + 5'-deoxyadenosine + L-methionine + A + S-adenosyl-L-homocysteine + 2 H(+). In terms of biological role, catalyzes the methylthiolation of an aspartic acid residue of ribosomal protein uS12. The sequence is that of Ribosomal protein uS12 methylthiotransferase RimO from Cereibacter sphaeroides (strain ATCC 17023 / DSM 158 / JCM 6121 / CCUG 31486 / LMG 2827 / NBRC 12203 / NCIMB 8253 / ATH 2.4.1.) (Rhodobacter sphaeroides).